The following is a 433-amino-acid chain: C4-dicarboxylate transport protein (433 aa).

8 helical membrane passes run 8-28 (ILYVQVLFAICIGILLGHFWP), 44-64 (LIKMIIGPIIFCTVVTGIAGM), 78-98 (LLYFEVVSTFALLIGLGAAHL), 148-168 (GDILQILLVSLFFGAALAVLG), 188-208 (IVHVITKVAPIGAFGAMAFTI), 222-242 (LIGTFYFTAIVFVLVVLGTIA), 307-327 (IYMTMAVIFIAQATGIELTLM), and 355-375 (AATLAVVPTIPVAGMVLILGI).

The protein belongs to the dicarboxylate/amino acid:cation symporter (DAACS) (TC 2.A.23) family.

The protein resides in the cell inner membrane. In terms of biological role, responsible for the transport of dicarboxylates such as succinate, fumarate, and malate from the periplasm across the membrane. This chain is C4-dicarboxylate transport protein, found in Cupriavidus taiwanensis (strain DSM 17343 / BCRC 17206 / CCUG 44338 / CIP 107171 / LMG 19424 / R1) (Ralstonia taiwanensis (strain LMG 19424)).